The chain runs to 138 residues: Basic phospholipase A2 Bs-N6 (138 aa).

The first 16 residues, M1–G16, serve as a signal peptide directing secretion. 7 disulfides stabilise this stretch: C42–C131, C44–C60, C59–C111, C65–C138, C66–C104, C73–C97, and C91–C102. Positions 43, 45, and 47 each coordinate Ca(2+). Residue H63 is part of the active site. A Ca(2+)-binding site is contributed by D64. D105 is an active-site residue.

Monomer. Ca(2+) serves as cofactor. In terms of processing, contains 7 disulfide bonds. Expressed by the venom gland.

The protein localises to the secreted. It carries out the reaction a 1,2-diacyl-sn-glycero-3-phosphocholine + H2O = a 1-acyl-sn-glycero-3-phosphocholine + a fatty acid + H(+). Snake venom phospholipase A2 (PLA2) that shows myotoxic activities. PLA2 catalyzes the calcium-dependent hydrolysis of the 2-acyl groups in 3-sn-phosphoglycerides. In Bothriechis schlegelii (Eyelash palm pitviper), this protein is Basic phospholipase A2 Bs-N6.